A 217-amino-acid chain; its full sequence is 3,4-dihydroxy-2-butanone 4-phosphate synthase (217 aa).

Residues 37 to 38 (RE), aspartate 42, 150 to 154 (RRGHT), and glutamate 174 contribute to the D-ribulose 5-phosphate site. Glutamate 38 lines the Mg(2+) pocket. Histidine 153 provides a ligand contact to Mg(2+).

It belongs to the DHBP synthase family. In terms of assembly, homodimer. The cofactor is Mg(2+). Mn(2+) is required as a cofactor.

It carries out the reaction D-ribulose 5-phosphate = (2S)-2-hydroxy-3-oxobutyl phosphate + formate + H(+). The protein operates within cofactor biosynthesis; riboflavin biosynthesis; 2-hydroxy-3-oxobutyl phosphate from D-ribulose 5-phosphate: step 1/1. In terms of biological role, catalyzes the conversion of D-ribulose 5-phosphate to formate and 3,4-dihydroxy-2-butanone 4-phosphate. The protein is 3,4-dihydroxy-2-butanone 4-phosphate synthase of Yersinia enterocolitica serotype O:8 / biotype 1B (strain NCTC 13174 / 8081).